Consider the following 510-residue polypeptide: GMP synthase [glutamine-hydrolyzing] (510 aa).

The Glutamine amidotransferase type-1 domain occupies 5-195 (LVLILDFGGQ…LYEVCHCQGD (191 aa)). Cys-82 serves as the catalytic Nucleophile. Catalysis depends on residues His-169 and Glu-171. A GMPS ATP-PPase domain is found at 196–385 (WTMENYIEKE…LGVPEEIVWR (190 aa)). Residue 223 to 229 (SGGVDSS) coordinates ATP.

Homodimer.

It catalyses the reaction XMP + L-glutamine + ATP + H2O = GMP + L-glutamate + AMP + diphosphate + 2 H(+). It functions in the pathway purine metabolism; GMP biosynthesis; GMP from XMP (L-Gln route): step 1/1. Its function is as follows. Catalyzes the synthesis of GMP from XMP. This chain is GMP synthase [glutamine-hydrolyzing], found in Alkaliphilus metalliredigens (strain QYMF).